Reading from the N-terminus, the 306-residue chain is Methionyl-tRNA formyltransferase (306 aa).

Residue 108–111 (SLLP) coordinates (6S)-5,6,7,8-tetrahydrofolate.

It belongs to the Fmt family.

The enzyme catalyses L-methionyl-tRNA(fMet) + (6R)-10-formyltetrahydrofolate = N-formyl-L-methionyl-tRNA(fMet) + (6S)-5,6,7,8-tetrahydrofolate + H(+). Its function is as follows. Attaches a formyl group to the free amino group of methionyl-tRNA(fMet). The formyl group appears to play a dual role in the initiator identity of N-formylmethionyl-tRNA by promoting its recognition by IF2 and preventing the misappropriation of this tRNA by the elongation apparatus. This chain is Methionyl-tRNA formyltransferase, found in Arthrobacter sp. (strain FB24).